Reading from the N-terminus, the 257-residue chain is Aspartate/glutamate leucyltransferase (257 aa).

This sequence belongs to the R-transferase family. Bpt subfamily.

It is found in the cytoplasm. The enzyme catalyses N-terminal L-glutamyl-[protein] + L-leucyl-tRNA(Leu) = N-terminal L-leucyl-L-glutamyl-[protein] + tRNA(Leu) + H(+). It catalyses the reaction N-terminal L-aspartyl-[protein] + L-leucyl-tRNA(Leu) = N-terminal L-leucyl-L-aspartyl-[protein] + tRNA(Leu) + H(+). Functionally, functions in the N-end rule pathway of protein degradation where it conjugates Leu from its aminoacyl-tRNA to the N-termini of proteins containing an N-terminal aspartate or glutamate. The sequence is that of Aspartate/glutamate leucyltransferase from Sphingopyxis alaskensis (strain DSM 13593 / LMG 18877 / RB2256) (Sphingomonas alaskensis).